Here is a 92-residue protein sequence, read N- to C-terminus: DNA-directed RNA polymerase subunit Rpo11 (92 aa).

The protein belongs to the archaeal Rpo11/eukaryotic RPB11/RPC19 RNA polymerase subunit family. As to quaternary structure, part of the RNA polymerase complex.

Its subcellular location is the cytoplasm. It catalyses the reaction RNA(n) + a ribonucleoside 5'-triphosphate = RNA(n+1) + diphosphate. Its function is as follows. DNA-dependent RNA polymerase (RNAP) catalyzes the transcription of DNA into RNA using the four ribonucleoside triphosphates as substrates. In Methanosarcina acetivorans (strain ATCC 35395 / DSM 2834 / JCM 12185 / C2A), this protein is DNA-directed RNA polymerase subunit Rpo11.